Consider the following 543-residue polypeptide: Periplasmic oligopeptide-binding protein OppA (543 aa).

An N-terminal signal peptide occupies residues 1-26 (MSNITKKSLIAAGILTALIAASAATA). An intrachain disulfide couples Cys-297 to Cys-443.

Belongs to the bacterial solute-binding protein 5 family. The complex is composed of two ATP-binding proteins (OppD and OppF), two transmembrane proteins (OppB and OppC) and a solute-binding protein (OppA).

Its subcellular location is the periplasm. Part of the ABC transporter complex OppABCDF involved in the uptake of oligopeptides, including the cell wall murein tripeptide L-alanyl-gamma-D-glutamyl-meso-diaminopimelate. Plays an important nutritional role and is involved in the recycling of cell wall peptides. Binds peptides containing from two to five amino acid residues regardless of their sequence. Also binds cell wall peptides, such as L-alanyl-gamma-D-glutamyl-meso-diaminopimelate. The sequence is that of Periplasmic oligopeptide-binding protein OppA from Salmonella typhimurium (strain LT2 / SGSC1412 / ATCC 700720).